We begin with the raw amino-acid sequence, 207 residues long: SPRY domain-containing protein 4 (207 aa).

In terms of domain architecture, B30.2/SPRY spans Tyr12–Leu207. An N6-acetyllysine mark is found at Lys53 and Lys130. Lys139 is subject to N6-succinyllysine.

The polypeptide is SPRY domain-containing protein 4 (Spryd4) (Rattus norvegicus (Rat)).